Reading from the N-terminus, the 208-residue chain is NADH-quinone oxidoreductase subunit I 2 (208 aa).

4Fe-4S ferredoxin-type domains follow at residues 79–109 (ILVE…IEGK) and 119–148 (SVFN…QTDI). 8 residues coordinate [4Fe-4S] cluster: C88, C91, C94, C98, C128, C131, C134, and C138.

This sequence belongs to the complex I 23 kDa subunit family. In terms of assembly, NDH-1 is composed of 14 different subunits. Subunits NuoA, H, J, K, L, M, N constitute the membrane sector of the complex. Requires [4Fe-4S] cluster as cofactor.

Its subcellular location is the cell inner membrane. It catalyses the reaction a quinone + NADH + 5 H(+)(in) = a quinol + NAD(+) + 4 H(+)(out). NDH-1 shuttles electrons from NADH, via FMN and iron-sulfur (Fe-S) centers, to quinones in the respiratory chain. The immediate electron acceptor for the enzyme in this species is believed to be ubiquinone. Couples the redox reaction to proton translocation (for every two electrons transferred, four hydrogen ions are translocated across the cytoplasmic membrane), and thus conserves the redox energy in a proton gradient. The chain is NADH-quinone oxidoreductase subunit I 2 from Aquifex aeolicus (strain VF5).